The sequence spans 172 residues: DNA-directed RNA polymerase II subunit RPB7 (172 aa).

Belongs to the eukaryotic RPB7/RPC8 RNA polymerase subunit family. Component of the RNA polymerase II (Pol II) complex consisting of 12 subunits. RPB4 and RPB7 form a subcomplex that protrudes from the 10-subunit Pol II core complex.

Its subcellular location is the nucleus. In terms of biological role, DNA-dependent RNA polymerase catalyzes the transcription of DNA into RNA using the four ribonucleoside triphosphates as substrates. Component of RNA polymerase II which synthesizes mRNA precursors and many functional non-coding RNAs. Pol II is the central component of the basal RNA polymerase II transcription machinery. It is composed of mobile elements that move relative to each other. RPB7 is part of a subcomplex with RPB4 that binds to a pocket formed by RPB1, RPB2 and RPB6 at the base of the clamp element. The RPB4-RPB7 subcomplex seems to lock the clamp via RPB7 in the closed conformation thus preventing double-stranded DNA to enter the active site cleft. The RPB4-RPB7 subcomplex binds single-stranded DNA and RNA. The polypeptide is DNA-directed RNA polymerase II subunit RPB7 (polr2g) (Danio rerio (Zebrafish)).